The following is a 455-amino-acid chain: tRNA modification GTPase MnmE (455 aa).

R22 provides a ligand contact to (6S)-5-formyl-5,6,7,8-tetrahydrofolate. The disordered stretch occupies residues 43-67 (RRATRAALRSPPSGPGPTGPGPEEG). (6S)-5-formyl-5,6,7,8-tetrahydrofolate is bound by residues E92 and R132. Positions 228–381 (GLQVAVVGAP…LEAALESRAR (154 aa)) constitute a TrmE-type G domain. N238 contributes to the K(+) binding site. Residues 238–243 (NVGKSS), 257–263 (SDIAGTT), and 282–285 (DTAG) each bind GTP. S242 is a Mg(2+) binding site. Residues S257, I259, and T262 each contribute to the K(+) site. T263 is a Mg(2+) binding site. Position 455 (K455) interacts with (6S)-5-formyl-5,6,7,8-tetrahydrofolate.

Belongs to the TRAFAC class TrmE-Era-EngA-EngB-Septin-like GTPase superfamily. TrmE GTPase family. Homodimer. Heterotetramer of two MnmE and two MnmG subunits. The cofactor is K(+).

The protein localises to the cytoplasm. Its function is as follows. Exhibits a very high intrinsic GTPase hydrolysis rate. Involved in the addition of a carboxymethylaminomethyl (cmnm) group at the wobble position (U34) of certain tRNAs, forming tRNA-cmnm(5)s(2)U34. The sequence is that of tRNA modification GTPase MnmE from Rhodospirillum rubrum (strain ATCC 11170 / ATH 1.1.1 / DSM 467 / LMG 4362 / NCIMB 8255 / S1).